We begin with the raw amino-acid sequence, 162 residues long: Phosphopantetheine adenylyltransferase (162 aa).

Residue Thr-10 participates in substrate binding. ATP-binding positions include 10–11 and His-18; that span reads TF. Positions 42, 74, and 88 each coordinate substrate. Residues 89–91, Glu-99, and 124–130 each bind ATP; these read GLR and FSCISST.

This sequence belongs to the bacterial CoaD family. In terms of assembly, homohexamer. It depends on Mg(2+) as a cofactor.

The protein localises to the cytoplasm. It catalyses the reaction (R)-4'-phosphopantetheine + ATP + H(+) = 3'-dephospho-CoA + diphosphate. It functions in the pathway cofactor biosynthesis; coenzyme A biosynthesis; CoA from (R)-pantothenate: step 4/5. In terms of biological role, reversibly transfers an adenylyl group from ATP to 4'-phosphopantetheine, yielding dephospho-CoA (dPCoA) and pyrophosphate. This Francisella philomiragia subsp. philomiragia (strain ATCC 25017 / CCUG 19701 / FSC 153 / O#319-036) protein is Phosphopantetheine adenylyltransferase.